The chain runs to 449 residues: G-protein coupled receptor 61 (449 aa).

Over residues 1–14 (MESSPIPQSSGNSS) the composition is skewed to low complexity. The disordered stretch occupies residues 1 to 29 (MESSPIPQSSGNSSTLGRALQTPGPSTAS). At 1-44 (MESSPIPQSSGNSSTLGRALQTPGPSTASGVPELGLRDVASESV) the chain is on the extracellular side. Asn12 carries an N-linked (GlcNAc...) asparagine glycan. The chain crosses the membrane as a helical span at residues 45-67 (ALFFMLLLDLTAVAGNAAVMAVI). Residues 68–75 (AKTPALRK) are Cytoplasmic-facing. A helical transmembrane segment spans residues 76-98 (FVFVFHLCLVDLLAALTLMPLAM). Topologically, residues 99 to 112 (LSSSALFDHALFGE) are extracellular. A helical transmembrane segment spans residues 113 to 135 (VACRLYLFLSVCFVSLAILSVSA). At 136 to 155 (INVERYYYVVHPMRYEVRMT) the chain is on the cytoplasmic side. The chain crosses the membrane as a helical span at residues 156-178 (LGLVASVLVGVWVKALAMASVPV). Over 179–206 (LGRVYWEEGAPSVNPGCSLQWSHSAYCQ) the chain is Extracellular. Residues 207–229 (LFVVVFAVLYFLLPLILIFVVYC) form a helical membrane-spanning segment. Over 230 to 287 (SMFRVARVAAMQHGPLPTWMETPRQRSESLSSRSTMVTSSGAHQTTPHRTFGGGKAAV) the chain is Cytoplasmic. The helical transmembrane segment at 288 to 310 (VLLAVGGQFLLCWLPYFSFHLYV) threads the bilayer. Over 311–324 (ALSAQPISAGQVEN) the chain is Extracellular. The chain crosses the membrane as a helical span at residues 325–344 (VVTWIGYFCFTSNPFFYGCL). At 345 to 449 (NRQIRGELSK…RPAPSPRLES (105 aa)) the chain is on the cytoplasmic side.

It belongs to the G-protein coupled receptor 1 family. As to quaternary structure, forms heterodimer with MTNR1B. Interacts with ARRB1 and ARRB2 in a spontaneous and agonist-independent manner; leading to the internalization of GPR61 in the endosomal compartment. In terms of tissue distribution, predominantly expressed in the brain and testes, with relatively lower expression observed in the eye, adrenal gland and pituitary gland.

The protein localises to the cell membrane. The protein resides in the endosome membrane. Orphan G-protein coupled receptor. Constitutively activates the G(s)-alpha/cAMP signaling pathway. Shows a reciprocal regulatory interaction with the melatonin receptor MTNR1B most likely through receptor heteromerization. May be involved in the regulation of food intake and body weight. The protein is G-protein coupled receptor 61 (Gpr61) of Mus musculus (Mouse).